The sequence spans 1275 residues: Streptococcal hemoprotein receptor (1275 aa).

The N-terminal stretch at 1–26 is a signal peptide; the sequence is MKKISKCAFVAISALVLIQATQTVKS. Residues 61–123 are HID 1; that stretch reads GKEYYKHIEK…KKDGDILITF (63 aa). Heme contacts are provided by Thr87, Arg196, Tyr197, and Met238. Residues 203–269 form an HID 2 region; it reads IKALTQQITK…KGFEDVTITV (67 aa). Residues 369 to 501 enclose the NEAT 1 domain; sequence LTEGTYTLNF…DMTFSKTVTK (133 aa). LRR repeat units lie at residues 544 to 567, 568 to 590, 592 to 614, 616 to 638, 639 to 662, 664 to 686, 687 to 710, 712 to 733, 734 to 757, 759 to 781, and 783 to 804; these read LEQI…LKHA, KNIT…LFSQ, KQLR…TFKS, AQLR…LFQS, LHHL…PFEG, SRLT…ALEP, LTSL…IEKL, ALST…SFKN, LPKL…IFKQ, NQLT…VFPD, and ETLN…VRAL. Residues 976–1138 form the NEAT 2 domain; the sequence is LRDGIYYLNA…TTEKAKVVKE (163 aa). Disordered stretches follow at residues 1137 to 1174, 1186 to 1205, and 1210 to 1248; these read KETN…SAAT, KATG…DKAE, and LVRD…ESSS. Residues 1138–1166 are compositionally biased toward polar residues; sequence ETNNPQENSHLTSTDQLKGPQNRQQEKTP. 2 stretches are compositionally biased toward basic and acidic residues: residues 1196–1205 and 1210–1229; these read SKTDDTDKAE and LVRD…TKTK. A helical transmembrane segment spans residues 1250-1269; the sequence is YHLIAGLSSFMIVALGFIIG.

Its subcellular location is the cell membrane. Its activity is regulated as follows. May modulate heme uptake according to heme availability. In the presence of high heme concentrations, NEAT 1 facilitates fast heme delivery to Shp, whereas NEAT 2 serves as a temporary storage for heme on the bacterial surface. When heme availability is limiting, heme from NEAT 2 is transferred back to NEAT 1 and from there to Shp. In terms of biological role, hemoprotein receptor that plays a central role in the acquisition of host heme, a source of iron during bacterial infection, and is therefore an important virulence factor. Captures host hemoproteins and their iron-containing heme molecules, and transfers the heme to the cell surface heme-binding protein Shp. Plays a pivotal role in iron acquisition and growth under iron-starvation conditions. Uses a cap and release mechanism in which Shr forms a dynamic complex with hemoglobin that enables the gated release of its most labile heme molecule. This mechanism exploits the hemoglobin beta subunit's inherent weaker affinity for heme, allowing S.pyogenes to preferentially capture only heme-saturated forms of hemoglobin that contain iron. In vitro, binds directly to a variety of heme-containing proteins, including hemoglobin, myoglobin, heme albumin and the hemoglobin-haptoglobin complex. It also binds to and acquires heme from methemoglobin, the ferric form of hemoglobin, which is likely to be a physiologically relevant heme source for the hemolytic group A streptococcus (GAS). Seems to have an inherent ability to reduce the ferric heme present in methemoglobin to ferrous heme and to provide a stable environment for the produced ferrous complex. Does not bind apohemoglobin, apohaptoglobin, fibrinogen or streptavidin, indicating that it specifically recognizes hemoproteins. Its function is as follows. In addition to its role in heme acquisition, functions as an adhesin, contributing to host cell adhesion and hence virulence. Specifically binds to extracellular matrix (ECM) components, including fibronectin and laminin, and mediates bacterial attachment to host epithelial cells. This Streptococcus pyogenes serotype M1 protein is Streptococcal hemoprotein receptor.